The sequence spans 343 residues: MPRGQKSKLRAREKRHQARCENQDLGATQATVAEGESPSPAYLLFGDRPQNLPAAETPSIPEALQGAPSTTNAIAPVSCSSNEGASSQDEKSLGSSREAEGWKEDPLNKKVVSLVHFLLQKYETKEPITKGDMIKFVIRKDKCHFNEILKRASEHMELALGVDLKEVDPIRHYYAFFSKLDLTYDETTSDEEKIPKTGLLMIALGVIFLNGNRAPEEAVWEIMNMMGVYADRKHFLYGDPRKVMTKDLVQLKYLEYQQVPNSDPPRYEFLWGPRAHAETSKMKVLEFVAKIHDTVPSAFPSCYEEALRDEEQRTQARAAARAHTAAMANARSRTTSSSFSHAK.

Basic residues predominate over residues 1–17; that stretch reads MPRGQKSKLRAREKRHQ. Residues 1–102 are disordered; sequence MPRGQKSKLR…LGSSREAEGW (102 aa). Over residues 67–87 the composition is skewed to polar residues; the sequence is APSTTNAIAPVSCSSNEGASS. Basic and acidic residues predominate over residues 88-102; it reads QDEKSLGSSREAEGW. An interaction with LNX1 region spans residues 100 to 343; it reads EGWKEDPLNK…TTSSSFSHAK (244 aa). One can recognise an MAGE domain in the interval 107–306; the sequence is LNKKVVSLVH…SAFPSCYEEA (200 aa). A disordered region spans residues 313-343; that stretch reads RTQARAAARAHTAAMANARSRTTSSSFSHAK. A compositionally biased stretch (low complexity) spans 316–333; the sequence is ARAAARAHTAAMANARSR. A compositionally biased stretch (polar residues) spans 334–343; it reads TTSSSFSHAK.

In terms of assembly, interacts with LNX1.

It localises to the cytoplasm. Its function is as follows. May enhance ubiquitin ligase activity of RING-type zinc finger-containing E3 ubiquitin-protein ligases. Proposed to act through recruitment and/or stabilization of the Ubl-conjugating enzyme (E2) at the E3:substrate complex. This chain is Melanoma-associated antigen B18 (MAGEB18), found in Homo sapiens (Human).